Reading from the N-terminus, the 105-residue chain is MINWSGKYISPYAEHGKKSKQVKKITVSIPIKVLEILTNERTRRQINNLRHATNSELLCEAFLHAFTGQPLPADEDLMKERYDEIPEKAKSRMRDLGIDPDEWQY.

This sequence belongs to the MetJ family. In terms of assembly, homodimer.

It localises to the cytoplasm. Functionally, this regulatory protein, when combined with SAM (S-adenosylmethionine) represses the expression of the methionine regulon and of enzymes involved in SAM synthesis. This is Met repressor from Haemophilus ducreyi (strain 35000HP / ATCC 700724).